The sequence spans 445 residues: Cyclic GMP-AMP synthase-like receptor 1 (445 aa).

Mg(2+)-binding residues include E70, D72, and D186. Position 70–72 (70–72 (EYD)) interacts with ATP. GTP contacts are provided by residues D186 and 232-239 (RTSFYEAE). ATP-binding positions include 236–239 (YEAE), K257, and 270–274 (SYHIK). A disordered region spans residues 357 to 445 (LNDDNENSVH…KSKTTTPKPS (89 aa)). A compositionally biased stretch (basic and acidic residues) spans 377-398 (QKMEKTSTESEQKKPTETKPNA). The span at 435-445 (TKSKTTTPKPS) shows a compositional bias: low complexity.

This sequence belongs to the mab-21 family. Requires Mg(2+) as cofactor. Mn(2+) is required as a cofactor.

The catalysed reaction is GTP + ATP = 3',2'-cGAMP + 2 diphosphate. It carries out the reaction GTP + ATP = pppA(2'-5')pG + diphosphate. It catalyses the reaction pppA(2'-5')pG = 3',2'-cGAMP + diphosphate. With respect to regulation, the enzyme activity is specifically activated by double-stranded RNA (dsRNA). Its function is as follows. Nucleotidyltransferase that catalyzes the formation of cyclic GMP-AMP (3',2'-cGAMP) from ATP and GTP and plays a key role in innate immunity. Synthesizes 3',2'-cGAMP in a two-step reaction through production of the linear intermediate pppA(2'-5')pG. Acts as a key sensor of double-stranded RNA (dsRNA), the presence of dsRNA in the cytoplasm being a danger signal that triggers the immune responses. Directly binds dsRNA, activating the nucleotidyltransferase activity, leading to synthesis of 3',2'-cGAMP, a second messenger that binds to and activates Sting, thereby triggering the antiviral immune response via activation of the NF-kappa-B transcription factor Rel (Relish). The sequence is that of Cyclic GMP-AMP synthase-like receptor 1 from Drosophila erecta (Fruit fly).